The chain runs to 47 residues: MAVYTLDLLAQLPEAYQAFGPLIDILPIIPLFFLLLAFVWQASVGFR.

Residues 1-10 constitute a propeptide that is removed on maturation; it reads MAVYTLDLLA. The chain crosses the membrane as a helical span at residues 19–39; it reads FGPLIDILPIIPLFFLLLAFV.

The protein belongs to the PsbK family. As to quaternary structure, PSII is composed of 1 copy each of membrane proteins PsbA, PsbB, PsbC, PsbD, PsbE, PsbF, PsbH, PsbI, PsbJ, PsbK, PsbL, PsbM, PsbT, PsbX, PsbY, PsbZ, Psb30/Ycf12, peripheral proteins PsbO, CyanoQ (PsbQ), PsbU, PsbV and a large number of cofactors. It forms dimeric complexes.

The protein localises to the cellular thylakoid membrane. In terms of biological role, one of the components of the core complex of photosystem II (PSII). PSII is a light-driven water:plastoquinone oxidoreductase that uses light energy to abstract electrons from H(2)O, generating O(2) and a proton gradient subsequently used for ATP formation. It consists of a core antenna complex that captures photons, and an electron transfer chain that converts photonic excitation into a charge separation. The chain is Photosystem II reaction center protein K from Synechococcus sp. (strain CC9311).